The primary structure comprises 519 residues: Glutamate--cysteine ligase (519 aa).

It belongs to the glutamate--cysteine ligase type 1 family. Type 1 subfamily.

It catalyses the reaction L-cysteine + L-glutamate + ATP = gamma-L-glutamyl-L-cysteine + ADP + phosphate + H(+). Its pathway is sulfur metabolism; glutathione biosynthesis; glutathione from L-cysteine and L-glutamate: step 1/2. The sequence is that of Glutamate--cysteine ligase from Edwardsiella ictaluri (strain 93-146).